The primary structure comprises 430 residues: Dihydroorotase (430 aa).

Positions 61 and 63 each coordinate Zn(2+). Substrate-binding positions include 63-65 (HLR) and Asn-95. Zn(2+)-binding residues include Asp-153, His-180, and His-233. Asn-279 contributes to the substrate binding site. A Zn(2+)-binding site is contributed by Asp-306. The active site involves Asp-306. Substrate is bound by residues His-310 and 324-325 (FG).

Belongs to the metallo-dependent hydrolases superfamily. DHOase family. Class I DHOase subfamily. Zn(2+) is required as a cofactor.

It carries out the reaction (S)-dihydroorotate + H2O = N-carbamoyl-L-aspartate + H(+). Its pathway is pyrimidine metabolism; UMP biosynthesis via de novo pathway; (S)-dihydroorotate from bicarbonate: step 3/3. In terms of biological role, catalyzes the reversible cyclization of carbamoyl aspartate to dihydroorotate. This Lactiplantibacillus plantarum (strain ATCC BAA-793 / NCIMB 8826 / WCFS1) (Lactobacillus plantarum) protein is Dihydroorotase.